The chain runs to 968 residues: MANRNLEKMASIDAQLRQLAPSKVSEDDKLIEYDALLLDRFLDILQNLHGEDLKETVQEVYELSAEYEGKHDPKKLEELGNVITSLDAGDSIVVAKSFSHMLNLANLAEEVQISRRRRNKLKKGDFADENNATTESDIEETLKKLVFELKKSPQEVFDALKNQTVDLVLTAHPTQSVRRSLLQKHARIRNCLSKLYAKDITPDDKQELDEALQREIQAAFRTDEIRRTPPTPQDEMRAGMSYFHETIWNGVPSFLRRVDTALNNIGIKERVPYNAPLIQFSSWMGGDRDGNPRVTPEVTRDVCLLARMMAANMYYSQIEDLMFELSMWRCNDELRVHADEVHRSSNKDEVAKHYIEFWKKVPTNEPYRVVLGEVRDRLYQTRERSRHLLSNGYSDIPEENTFTSVEEFLQPLELCYRSLCACGDRAIADGSLLDFLRQVSTFGLSIVRLDIRQESDRHTDVLDAITKHLEIGSYQEWSEEKRQEWLLSELSGKRPLFGPDLPQTEEIRDVLDTFHVIAELPPDNFGAYIISMATAPSDVLAVELLQRECHVKHPLRVVPLFEKLADLEAAPAALARLFSVDWYKNRIDGKQEVMIGYSDSGKDAGRFSAAWQLYKAQEELVKVAKKFGIKLTMFHGRGGTVGRGGGPTHLAILSQPPDTIHGSLRVTVQGEVIEQCFGEQHLCFRTLQRFTAATLEHGMNPPISPKPEWRAMMDQMAVIATEEYRSIVFKEPRFVEYFRLATPELEYGRMNIGSRPAKRRPSGGIETLRAIPWIFAWTQTRFHLPVWLGFGAAFKQVLDKNAKKNLSMLQEMYNQWPFFRVTLDLVEMVFAKGDPKIGALNDRLLVSKDLWPFGDQLRNKYEETKKLLLQVAGHKEILEGDPYLKQRLRLRHSPITTLNVFQAYTLKRIRDPNYKVKARPRISKESAEASKSADELIKLNPTSEYAPGLEDTLILTMKGIAAGMQNTG.

Phosphoserine is present on S11. Active-site residues include H172 and K602.

Belongs to the PEPCase type 1 family. Homotetramer. It depends on Mg(2+) as a cofactor.

The protein resides in the cytoplasm. It catalyses the reaction oxaloacetate + phosphate = phosphoenolpyruvate + hydrogencarbonate. By light-reversible phosphorylation. Its function is as follows. Through the carboxylation of phosphoenolpyruvate (PEP) it forms oxaloacetate, a four-carbon dicarboxylic acid source for the tricarboxylic acid cycle. The chain is Phosphoenolpyruvate carboxylase from Phaseolus vulgaris (Kidney bean).